We begin with the raw amino-acid sequence, 114 residues long: Putative membrane protein insertion efficiency factor (114 aa).

It belongs to the UPF0161 family.

It is found in the cell inner membrane. Functionally, could be involved in insertion of integral membrane proteins into the membrane. This chain is Putative membrane protein insertion efficiency factor, found in Wolinella succinogenes (strain ATCC 29543 / DSM 1740 / CCUG 13145 / JCM 31913 / LMG 7466 / NCTC 11488 / FDC 602W) (Vibrio succinogenes).